A 228-amino-acid polypeptide reads, in one-letter code: Thymidylate kinase (228 aa).

Residue Gly20–Ser27 coordinates ATP.

The protein belongs to the thymidylate kinase family.

It carries out the reaction dTMP + ATP = dTDP + ADP. In terms of biological role, phosphorylation of dTMP to form dTDP in both de novo and salvage pathways of dTTP synthesis. The chain is Thymidylate kinase from Afipia carboxidovorans (strain ATCC 49405 / DSM 1227 / KCTC 32145 / OM5) (Oligotropha carboxidovorans).